The sequence spans 192 residues: uncharacterized protein (192 aa).

Residues 29–160 (HRQAAVLIPI…PLDIYRRGDS (132 aa)) enclose the Nudix hydrolase domain. A Nudix box motif is present at residues 67–89 (GAVDDTDASVIAAALREAEEEVA). 2 residues coordinate Mg(2+): Glu83 and Glu87.

Belongs to the Nudix hydrolase family. PCD1 subfamily. Mn(2+) serves as cofactor. The cofactor is Mg(2+).

Functionally, probably mediates the hydrolysis of some nucleoside diphosphate derivatives. This is an uncharacterized protein from Shigella flexneri serotype 5b (strain 8401).